A 1287-amino-acid polypeptide reads, in one-letter code: Vacuolating cytotoxin autotransporter (1287 aa).

A signal peptide spans 1 to 33 (MEIQQTHRKINRPLVSLALVGALVSITPQQSHA). The interval 326 to 381 (PPEGGYKDKPNNTPSQSGAKNDKQESSQNNSNTQVINPPNSTQKTEVQPTQVIDGP) is disordered. Residues 351–376 (SSQNNSNTQVINPPNSTQKTEVQPTQ) show a composition bias toward polar residues. The 274-residue stretch at 1014–1287 (KYEKPTNVWA…ASNLGMRYSF (274 aa)) folds into the Autotransporter domain.

The protein resides in the periplasm. It is found in the secreted. It localises to the cell surface. The protein localises to the cell outer membrane. Induces vacuolation of eukaryotic cells. Causes ulceration and gastric lesions. The protein is Vacuolating cytotoxin autotransporter (vacA) of Helicobacter pylori (Campylobacter pylori).